Here is a 913-residue protein sequence, read N- to C-terminus: Striatin-interacting protein homolog (913 aa).

3 stretches are compositionally biased toward low complexity: residues 177–188, 195–204, and 791–811; these read QQQQQQQQNENE, TNFTTTTTTT, and NNNN…NNDN. Disordered stretches follow at residues 177-204 and 791-814; these read QQQQ…TTTT and NNNN…NGLT.

It belongs to the STRIP family.

This is Striatin-interacting protein homolog (fam40) from Dictyostelium discoideum (Social amoeba).